Reading from the N-terminus, the 348-residue chain is Fructose-1,6-bisphosphatase class 1 2 (348 aa).

Residues Glu-93, Asp-117, Leu-119, and Asp-120 each contribute to the Mg(2+) site. Residues 120–123 (DGSS), Asn-213, Tyr-244, and Lys-274 contribute to the substrate site. Residue Glu-280 coordinates Mg(2+).

This sequence belongs to the FBPase class 1 family. As to quaternary structure, homotetramer. Requires Mg(2+) as cofactor.

It localises to the cytoplasm. It carries out the reaction beta-D-fructose 1,6-bisphosphate + H2O = beta-D-fructose 6-phosphate + phosphate. It participates in carbohydrate biosynthesis; gluconeogenesis. The polypeptide is Fructose-1,6-bisphosphatase class 1 2 (Christiangramia forsetii (strain DSM 17595 / CGMCC 1.15422 / KT0803) (Gramella forsetii)).